We begin with the raw amino-acid sequence, 358 residues long: Aromatic amino acid aminotransferase (358 aa).

An N6-(pyridoxal phosphate)lysine modification is found at Lys-214.

This sequence belongs to the class-II pyridoxal-phosphate-dependent aminotransferase family. In terms of assembly, homodimer. It depends on pyridoxal 5'-phosphate as a cofactor.

It catalyses the reaction an aromatic L-alpha-amino acid + 2-oxoglutarate = an aromatic oxo-acid + L-glutamate. Functionally, aminotransferase that catalyzes the conversion of aromatic amino acids and 2-oxoglutarate into corresponding aromatic oxo acids and L-glutamate. This Rhodococcus jostii (strain RHA1) protein is Aromatic amino acid aminotransferase.